Here is a 281-residue protein sequence, read N- to C-terminus: MRHAEGAAVSADPTQVLAFETDCHIFDGCGFPSPGLHSFLFEPLWGDHDSNLYFNKPMLLALLGSIVIVGFFWAAFRKPKVVPGKLQMVAEAGYDFIRRGVVYETIGKKEGEKYVPLVVSLFFFVWMMNLWSIIPVAQFPVTSIIAYPAVLAAIVYVTWITLTFKRQGFVGFFKNVTGYDKSLGPVLPLAMLIEFFSNILIRPFTHAVRLFANMFAGHTLLLLFTIASWYLLNGVGIAYAGVSFIMTVVMTAFELFIQALQAYVFVLLTCTYIQGAMAEHH.

The next 7 membrane-spanning stretches (helical) occupy residues 56–76 (KPMLLALLGSIVIVGFFWAAF), 117–137 (LVVSLFFFVWMMNLWSIIPVA), 144–164 (IIAYPAVLAAIVYVTWITLTF), 181–201 (KSLGPVLPLAMLIEFFSNILI), 215–235 (FAGHTLLLLFTIASWYLLNGV), 237–257 (IAYAGVSFIMTVVMTAFELFI), and 259–279 (ALQAYVFVLLTCTYIQGAMAE).

Belongs to the ATPase A chain family. F-type ATPases have 2 components, CF(1) - the catalytic core - and CF(0) - the membrane proton channel. CF(1) has five subunits: alpha(3), beta(3), gamma(1), delta(1), epsilon(1). CF(0) has three main subunits: a(1), b(2) and c(9-12). The alpha and beta chains form an alternating ring which encloses part of the gamma chain. CF(1) is attached to CF(0) by a central stalk formed by the gamma and epsilon chains, while a peripheral stalk is formed by the delta and b chains.

It localises to the cell membrane. Its function is as follows. Key component of the proton channel; it plays a direct role in the translocation of protons across the membrane. This Streptomyces lividans protein is ATP synthase subunit a.